A 255-amino-acid polypeptide reads, in one-letter code: Reaction center protein L chain (255 aa).

3 helical membrane passes run 12–35 (GFFG…GTAL), 64–92 (GLWQ…RKLG), and 95–120 (LHIP…LLLG). Residues H133 and H153 each contribute to the (7R,8Z)-bacteriochlorophyll b site. The helical transmembrane segment at 150–179 (NPAHMIGITFFFTNCMAFGMHGSIILSVLN) threads the bilayer. Residue H170 coordinates Fe cation. A ubiquinone is bound at residue F196. A helical transmembrane segment spans residues 205–231 (GTLGIHRLGVFLAISAAFWSAVCIILS). Residue H210 participates in Fe cation binding.

This sequence belongs to the reaction center PufL/M/PsbA/D family. In terms of assembly, reaction center is composed of four bacteriochlorophylls, two bacteriopheophytins, two ubiquinones, one iron, and three highly hydrophobic polypeptide chains (designated L, M, and H).

Its subcellular location is the cellular chromatophore membrane. Functionally, the reaction center is a membrane-bound complex that mediates the initial photochemical event in the electron transfer process of photosynthesis. The sequence is that of Reaction center protein L chain (pufL) from Pararhodospirillum photometricum (Rhodospirillum photometricum).